Reading from the N-terminus, the 252-residue chain is Protein HEAT-INDUCED TAS1 TARGET 2 (252 aa).

Belongs to the heat induced plant HTT protein family. In terms of tissue distribution, expressed ubiquitously, including in seedlings, leaves, stems, inflorescences and siliques.

Its subcellular location is the cytoplasm. The protein resides in the nucleus. Mediates both basal and acquired thermotolerance via HSFA1s-directed pathways (e.g. HSFA1A, HSFA1B, and HSFA1D). Triggers the expression of HSFA1A and HSFA1B. The protein is Protein HEAT-INDUCED TAS1 TARGET 2 of Arabidopsis thaliana (Mouse-ear cress).